The sequence spans 700 residues: Myotubularin-related protein 11 (700 aa).

The disordered stretch occupies residues 1–39; it reads MWWGGRGQSFNIAPQKEEPEMGLSGPKSNPGNRMPEPSS. The Myotubularin phosphatase domain maps to 201-644; it reads LETLEDWETE…PQIRFWKRCY (444 aa).

It belongs to the protein-tyrosine phosphatase family. Non-receptor class myotubularin subfamily.

This chain is Myotubularin-related protein 11 (Mtmr11), found in Mus musculus (Mouse).